The following is a 78-amino-acid chain: Apolipoprotein C-I (78 aa).

Positions 1-26 (MRLILWLPVLVVVLLMVTEGPAPAQG) are cleaved as a signal peptide.

It belongs to the apolipoprotein C1 family.

The protein resides in the secreted. In terms of biological role, inhibitor of lipoprotein binding to the low density lipoprotein (LDL) receptor, LDL receptor-related protein, and very low density lipoprotein (VLDL) receptor. Associates with high density lipoproteins (HDL) and the triacylglycerol-rich lipoproteins in the plasma and makes up about 10% of the protein of the VLDL and 2% of that of HDL. Appears to interfere directly with fatty acid uptake and is also the major plasma inhibitor of cholesteryl ester transfer protein (CETP). Binds free fatty acids and reduces their intracellular esterification. Modulates the interaction of APOE with beta-migrating VLDL and inhibits binding of beta-VLDL to the LDL receptor-related protein. This is Apolipoprotein C-I (APOC1) from Panthera tigris altaica (Siberian tiger).